The following is a 291-amino-acid chain: Lipoyl synthase (291 aa).

The [4Fe-4S] cluster site is built by C35, C40, C46, C61, C65, C68, and S273. The Radical SAM core domain occupies 47–262; that stretch reads FGKRQATFLI…KEKALAMGFE (216 aa).

Belongs to the radical SAM superfamily. Lipoyl synthase family. The cofactor is [4Fe-4S] cluster.

Its subcellular location is the cytoplasm. The enzyme catalyses [[Fe-S] cluster scaffold protein carrying a second [4Fe-4S](2+) cluster] + N(6)-octanoyl-L-lysyl-[protein] + 2 oxidized [2Fe-2S]-[ferredoxin] + 2 S-adenosyl-L-methionine + 4 H(+) = [[Fe-S] cluster scaffold protein] + N(6)-[(R)-dihydrolipoyl]-L-lysyl-[protein] + 4 Fe(3+) + 2 hydrogen sulfide + 2 5'-deoxyadenosine + 2 L-methionine + 2 reduced [2Fe-2S]-[ferredoxin]. It functions in the pathway protein modification; protein lipoylation via endogenous pathway; protein N(6)-(lipoyl)lysine from octanoyl-[acyl-carrier-protein]: step 2/2. Catalyzes the radical-mediated insertion of two sulfur atoms into the C-6 and C-8 positions of the octanoyl moiety bound to the lipoyl domains of lipoate-dependent enzymes, thereby converting the octanoylated domains into lipoylated derivatives. This is Lipoyl synthase from Geobacter sp. (strain M21).